Consider the following 266-residue polypeptide: Glutamate racemase (266 aa).

Substrate-binding positions include 9-10 (DS) and 41-42 (YG). Cys72 acts as the Proton donor/acceptor in catalysis. 73–74 (NT) provides a ligand contact to substrate. Cys183 functions as the Proton donor/acceptor in the catalytic mechanism. Substrate is bound at residue 184–185 (TH).

Belongs to the aspartate/glutamate racemases family.

It carries out the reaction L-glutamate = D-glutamate. It participates in cell wall biogenesis; peptidoglycan biosynthesis. Functionally, provides the (R)-glutamate required for cell wall biosynthesis. This is Glutamate racemase from Listeria monocytogenes serotype 4a (strain HCC23).